Reading from the N-terminus, the 196-residue chain is Carnitine operon protein CaiE (196 aa).

The disordered stretch occupies residues 173–196 (TQPLRQMEGNRPRLQGTTDVAPKR).

This sequence belongs to the transferase hexapeptide repeat family.

It functions in the pathway amine and polyamine metabolism; carnitine metabolism. In terms of biological role, overproduction of CaiE stimulates the activity of CaiB and CaiD. In Escherichia coli (strain SMS-3-5 / SECEC), this protein is Carnitine operon protein CaiE.